The following is a 107-amino-acid chain: Nucleoid-associated protein Xfasm12_1216 (107 aa).

It belongs to the YbaB/EbfC family. As to quaternary structure, homodimer.

It is found in the cytoplasm. The protein localises to the nucleoid. Binds to DNA and alters its conformation. May be involved in regulation of gene expression, nucleoid organization and DNA protection. This chain is Nucleoid-associated protein Xfasm12_1216, found in Xylella fastidiosa (strain M12).